We begin with the raw amino-acid sequence, 399 residues long: Phosphoglycerate kinase (399 aa).

Residues 22–24 (DFN), arginine 37, 60–63 (HFGR), arginine 118, and arginine 151 each bind substrate. ATP contacts are provided by residues lysine 201, glutamate 322, and 352–355 (GGDS).

This sequence belongs to the phosphoglycerate kinase family. Monomer.

It is found in the cytoplasm. It carries out the reaction (2R)-3-phosphoglycerate + ATP = (2R)-3-phospho-glyceroyl phosphate + ADP. The protein operates within carbohydrate degradation; glycolysis; pyruvate from D-glyceraldehyde 3-phosphate: step 2/5. The protein is Phosphoglycerate kinase of Wolbachia sp. subsp. Brugia malayi (strain TRS).